Here is a 161-residue protein sequence, read N- to C-terminus: MKHLPKHLRPRWRYLAVGIETWPNASFGRRAFQREVWYAAQNLLGDTGSAETDMTVLQFHDYDGTAEAIVRTRRGQTNPARAALTCLDSVDDDDVRVRVRGISGTVRACEEKYIRGPPEFTEQRHVVFENADRSATVRPPRYDVETASDGAFVGATALDFR.

The protein belongs to the eukaryotic/archaeal RNase P protein component 2 family. In terms of assembly, consists of a catalytic RNA component and at least 4-5 protein subunits.

It is found in the cytoplasm. It catalyses the reaction Endonucleolytic cleavage of RNA, removing 5'-extranucleotides from tRNA precursor.. Functionally, part of ribonuclease P, a protein complex that generates mature tRNA molecules by cleaving their 5'-ends. The polypeptide is Ribonuclease P protein component 2 (Haloarcula marismortui (strain ATCC 43049 / DSM 3752 / JCM 8966 / VKM B-1809) (Halobacterium marismortui)).